Reading from the N-terminus, the 142-residue chain is Ctenidin-3 (142 aa).

The N-terminal stretch at 1 to 19 (MKHLIPLIVMASVVLAVYA) is a signal peptide. The residue at position 139 (Tyr139) is a Tyrosine amide.

In terms of tissue distribution, expressed in hemocytes (at protein level).

The protein resides in the secreted. Functionally, antimicrobial protein with bacteriostatic activity against the Gram-negative bacterium E.coli, and very weak activity against the Gram-positive bacterium S.aureus. Lacks activity against the yeast C.albicans. The polypeptide is Ctenidin-3 (Cupiennius salei (American wandering spider)).